We begin with the raw amino-acid sequence, 954 residues long: MSMPKDFTFTDYKPYDFANRRHIGPSPAEMDEMLKVVGYPSLDALIDDTVPPSIRQRTPLAWGAPMTEREALDKLRETANRNRKLVSLIGQGYYGTITPPVIQRNILENPAWYTAYTPYQPEISQGRLEALLNYQTMVCDLTGLDVANASLLDEATAAAEAMAIAERVAKSKAKAFFIDENCHPQTIALLKTRAEPLGWQIVLGDPFEDLDAAGVFGAIFQYPGTYGHVRDFSGLIAKLHGQGAIAAVAADPLALALLKSPGEMGADIAIGSTQRFGVPVGYGGPHAAYMAVKDAYKRSMPGRLVGVSVDARGNRAYRLSLQTREQHIRREKATSNICTAQVLLAVMASMYAVFHGPDGIKAIAQSVHQKTVRLAMGLEKLGYTVEPDVFFDTITVEVGKLQGIILKAAVAEEVNLRKIGTTRIGISLDERSRPVTLEAVWRAFGGDFKVEEFEPDYRLPQELLRTSAYLTHPIFHMNRAESEMTRYMRRLADRDLALDRAMIPLGSCTMKLNATAEMLPITWPEFSEIHPFVPADQALGYQHLIEDLSQKLCAITGYDAISMQPNSGAQGEYAGLLAIRAYHIANGNEHRDVCLIPTSAHGTNPASAQMAGMKVVVVKVSDAGEIDMDDFRAKAEQYADTLSCCMITYPSTHGVFEENVREVCEVVHKHGGQVYLDGANMNAMVGLSRPGDIGSDVSHLNLHKTFCIPHGGGGPGMGPIGVKSHLAPFLPGHPQTDGHEGAVSAAPFGSASILPISWSYCLMMGGEGLTQATKVAILNANYVAARLKGAYDVLYKSAKGRVAHECIIDTRPLAESAGVTVDDVAKRLIDCGFHAPTMSWPVAGTLMIEPTESETKAELDRFCDAMLAIREEARAIEDGRMDKVNNPLKNAPHTVEDLVGDWDRPYSREQACFPPGAFRVDKYWSPVNRVDNVYGDRNLVCTCPPIESYAEAAE.

An N6-(pyridoxal phosphate)lysine modification is found at lysine 704.

This sequence belongs to the GcvP family. In terms of assembly, the glycine cleavage system is composed of four proteins: P, T, L and H. Requires pyridoxal 5'-phosphate as cofactor.

The catalysed reaction is N(6)-[(R)-lipoyl]-L-lysyl-[glycine-cleavage complex H protein] + glycine + H(+) = N(6)-[(R)-S(8)-aminomethyldihydrolipoyl]-L-lysyl-[glycine-cleavage complex H protein] + CO2. Functionally, the glycine cleavage system catalyzes the degradation of glycine. The P protein binds the alpha-amino group of glycine through its pyridoxal phosphate cofactor; CO(2) is released and the remaining methylamine moiety is then transferred to the lipoamide cofactor of the H protein. The polypeptide is Glycine dehydrogenase (decarboxylating) (Rhizobium meliloti (strain 1021) (Ensifer meliloti)).